The following is a 494-amino-acid chain: Anthranilate synthase component 1 (494 aa).

Residues serine 52 and 274–276 contribute to the L-tryptophan site; that span reads PYM. 309–310 is a binding site for chorismate; sequence GT. Glutamate 336 serves as a coordination point for Mg(2+). Residues tyrosine 424, arginine 444, 458–460, and glycine 460 each bind chorismate; that span reads GAG. Glutamate 473 contributes to the Mg(2+) binding site.

It belongs to the anthranilate synthase component I family. In terms of assembly, heterotetramer consisting of two non-identical subunits: a beta subunit (TrpG) and a large alpha subunit (TrpE). Mg(2+) serves as cofactor.

The enzyme catalyses chorismate + L-glutamine = anthranilate + pyruvate + L-glutamate + H(+). It functions in the pathway amino-acid biosynthesis; L-tryptophan biosynthesis; L-tryptophan from chorismate: step 1/5. Feedback inhibited by tryptophan. In terms of biological role, part of a heterotetrameric complex that catalyzes the two-step biosynthesis of anthranilate, an intermediate in the biosynthesis of L-tryptophan. In the first step, the glutamine-binding beta subunit (TrpG) of anthranilate synthase (AS) provides the glutamine amidotransferase activity which generates ammonia as a substrate that, along with chorismate, is used in the second step, catalyzed by the large alpha subunit of AS (TrpE) to produce anthranilate. In the absence of TrpG, TrpE can synthesize anthranilate directly from chorismate and high concentrations of ammonia. This Aquifex aeolicus (strain VF5) protein is Anthranilate synthase component 1 (trpE).